The sequence spans 378 residues: Erythronate-4-phosphate dehydrogenase (378 aa).

S45 and T66 together coordinate substrate. The NAD(+) site is built by D146 and T175. R208 is a catalytic residue. D232 serves as a coordination point for NAD(+). E237 is an active-site residue. H254 acts as the Proton donor in catalysis. Residue G257 participates in NAD(+) binding. Residue Y258 coordinates substrate.

The protein belongs to the D-isomer specific 2-hydroxyacid dehydrogenase family. PdxB subfamily. As to quaternary structure, homodimer.

It localises to the cytoplasm. It carries out the reaction 4-phospho-D-erythronate + NAD(+) = (R)-3-hydroxy-2-oxo-4-phosphooxybutanoate + NADH + H(+). The protein operates within cofactor biosynthesis; pyridoxine 5'-phosphate biosynthesis; pyridoxine 5'-phosphate from D-erythrose 4-phosphate: step 2/5. Functionally, catalyzes the oxidation of erythronate-4-phosphate to 3-hydroxy-2-oxo-4-phosphonooxybutanoate. The polypeptide is Erythronate-4-phosphate dehydrogenase (Escherichia coli O139:H28 (strain E24377A / ETEC)).